The following is a 429-amino-acid chain: Patatin-like phospholipase domain-containing protein 5 (429 aa).

A PNPLA domain is found at 12–181; that stretch reads LSFSGAGYLG…SNNLPFADCP (170 aa). Positions 16 to 21 match the GXGXXG motif; that stretch reads GAGYLG. The GXSXG motif lies at 47 to 51; that stretch reads GSSSG. Ser-49 functions as the Nucleophile in the catalytic mechanism. The active-site Proton acceptor is the Asp-168. Residues 168-170 carry the DGA/G motif; that stretch reads DGA.

As to expression, expressed in brain and pituitary gland.

It catalyses the reaction a triacylglycerol + H2O = a diacylglycerol + a fatty acid + H(+). Has abundant triacylglycerol lipase activity. This Homo sapiens (Human) protein is Patatin-like phospholipase domain-containing protein 5.